The primary structure comprises 404 residues: L-cysteine:1D-myo-inositol 2-amino-2-deoxy-alpha-D-glucopyranoside ligase 1 (404 aa).

Cysteine 47 contacts Zn(2+). Residues 47-50 (CGIT), threonine 62, and 85-87 (NIT) contribute to the L-cysteinyl-5'-AMP site. The 'HIGH' region signature appears at 49 to 59 (ITPYDSTHLGH). A 'ERGGDP' region motif is present at residues 188-193 (ERGGDP). Tryptophan 228 contributes to the L-cysteinyl-5'-AMP binding site. Cysteine 232 is a Zn(2+) binding site. 250–252 (GSD) provides a ligand contact to L-cysteinyl-5'-AMP. A Zn(2+)-binding site is contributed by histidine 257. Isoleucine 284 lines the L-cysteinyl-5'-AMP pocket. Positions 290–294 (KMSKS) match the 'KMSKS' region motif.

Belongs to the class-I aminoacyl-tRNA synthetase family. MshC subfamily. As to quaternary structure, monomer. The cofactor is Zn(2+).

The catalysed reaction is 1D-myo-inositol 2-amino-2-deoxy-alpha-D-glucopyranoside + L-cysteine + ATP = 1D-myo-inositol 2-(L-cysteinylamino)-2-deoxy-alpha-D-glucopyranoside + AMP + diphosphate + H(+). Functionally, catalyzes the ATP-dependent condensation of GlcN-Ins and L-cysteine to form L-Cys-GlcN-Ins. In Corynebacterium urealyticum (strain ATCC 43042 / DSM 7109), this protein is L-cysteine:1D-myo-inositol 2-amino-2-deoxy-alpha-D-glucopyranoside ligase 1.